Here is a 521-residue protein sequence, read N- to C-terminus: Probable inorganic phosphate transporter 1-3 (521 aa).

The Cytoplasmic portion of the chain corresponds to 1 to 24 (MADQQLGVLKALDVAKTQLYHFTA). Residues 25-45 (IVIAGMGFFTDAYDLFCVSLV) traverse the membrane as a helical segment. Residues 46–70 (TKLLGRLYYFNPTSAKPGSLPPHVA) are Extracellular-facing. A helical transmembrane segment spans residues 71–91 (AAVNGVALCGTLAGQLFFGWL). Residues 92–99 (GDKLGRKK) are Cytoplasmic-facing. A helical transmembrane segment spans residues 100 to 120 (VYGITLIMMILCSVASGLSLG). At 121–131 (NSAKGVMTTLC) the chain is on the extracellular side. Residues 132 to 152 (FFRFWLGFGIGGDYPLSATIM) form a helical membrane-spanning segment. Residues 153-161 (SEYANKKTR) are Cytoplasmic-facing. The helical transmembrane segment at 162 to 182 (GAFIAAVFAMQGVGILAGGFV) threads the bilayer. At 183 to 211 (ALAVSSIFDKKFPSPTYEQDRFLSTPPQA) the chain is on the extracellular side. A helical transmembrane segment spans residues 212–232 (DYIWRIIVMFGALPAALTYYW). Topologically, residues 233–292 (RMKMPETARYTALVAKNIKQATADMSKVLQTDLELEERVEDDVKDPKKNYGLFSKEFLRR) are cytoplasmic. Residues 293–313 (HGLHLLGTTSTWFLLDIAFYS) form a helical membrane-spanning segment. Residues 314-348 (QNLFQKDIFSAIGWIPKAATMNAIHEVFKIARAQT) lie on the Extracellular side of the membrane. Residues 349–369 (LIALCSTVPGYWFTVAFIDII) form a helical membrane-spanning segment. The Cytoplasmic segment spans residues 370–371 (GR). Residues 372–392 (FAIQLMGFFMMTVFMFAIAFP) form a helical membrane-spanning segment. Over 393 to 402 (YNHWILPDNR) the chain is Extracellular. The chain crosses the membrane as a helical span at residues 403-423 (IGFVVMYSLTFFFANFGPNAT). Residues 424-441 (TFIVPAEIFPARLRSTCH) are Cytoplasmic-facing. Residues 442–462 (GISAATGKAGAIVGAFGFLYA) traverse the membrane as a helical segment. Over 463–484 (AQPQDKTKTDAGYPPGIGVKNS) the chain is Extracellular. The chain crosses the membrane as a helical span at residues 485 to 505 (LIMLGVINFVGMLFTFLVPEP). Residues 506 to 521 (KGKSLEELSGEAEVDK) lie on the Cytoplasmic side of the membrane.

The protein belongs to the major facilitator superfamily. Phosphate:H(+) symporter (TC 2.A.1.9) family. As to expression, mainly expressed in roots, especially in the stele of the primary root, the pericycle and trichoblasts of secondary roots. To a lower extent, present in hydathodes and vascular tissues of young leaves.

Its subcellular location is the membrane. High-affinity transporter for external inorganic phosphate. This is Probable inorganic phosphate transporter 1-3 (PHT1-3) from Arabidopsis thaliana (Mouse-ear cress).